A 252-amino-acid polypeptide reads, in one-letter code: Eukaryotic translation initiation factor 3 subunit K (252 aa).

The region spanning 46 to 225 (FDCYANLALL…VKVPTNKENE (180 aa)) is the PCI domain.

The protein belongs to the eIF-3 subunit K family. Component of the eukaryotic translation initiation factor 3 (eIF-3) complex.

It is found in the cytoplasm. Its function is as follows. Component of the eukaryotic translation initiation factor 3 (eIF-3) complex, which is involved in protein synthesis of a specialized repertoire of mRNAs and, together with other initiation factors, stimulates binding of mRNA and methionyl-tRNAi to the 40S ribosome. The eIF-3 complex specifically targets and initiates translation of a subset of mRNAs involved in cell proliferation. This is Eukaryotic translation initiation factor 3 subunit K from Aspergillus terreus (strain NIH 2624 / FGSC A1156).